The primary structure comprises 550 residues: Carboxypeptidase Y homolog A (550 aa).

A signal peptide spans 1 to 18 (MKSLVLGLLVGSAIASGP). Residues 19–131 (LQHVLHAPPE…KLAQYDLRIR (113 aa)) constitute a propeptide that is removed on maturation. 5 disulfide bridges follow: C185/C424, C319/C333, C343/C366, C350/C359, and C388/C394. N216 carries N-linked (GlcNAc...) asparagine glycosylation. Residue S272 is part of the active site. The active site involves D463. N493 and N514 each carry an N-linked (GlcNAc...) asparagine glycan. Residue H525 is part of the active site.

Belongs to the peptidase S10 family.

Its subcellular location is the vacuole. It carries out the reaction Release of a C-terminal amino acid with broad specificity.. Vacuolar carboxypeptidase involved in degradation of small peptides. Digests preferentially peptides containing an aliphatic or hydrophobic residue in P1' position, as well as methionine, leucine or phenylalanine in P1 position of ester substrate. The polypeptide is Carboxypeptidase Y homolog A (CPYA) (Paracoccidioides lutzii (strain ATCC MYA-826 / Pb01) (Paracoccidioides brasiliensis)).